The primary structure comprises 507 residues: Variant surface glycoprotein ILTAT 1.25 (507 aa).

The signal sequence occupies residues 1–21; that stretch reads MQSQQQPVFISIILLAINTDA. Positions 83 to 95 are enriched in basic and acidic residues; it reads EPEAAPKESRSDE. Residues 83 to 102 are disordered; sequence EPEAAPKESRSDETPEACKA. Asn141 and Asn371 each carry an N-linked (GlcNAc...) asparagine glycan. Residues 384–395 are compositionally biased toward low complexity; sequence PTKQPPAKAAAA. A disordered region spans residues 384 to 474; the sequence is PTKQPPAKAA…KKEEECKSPN (91 aa). Residues 396-420 are compositionally biased toward basic and acidic residues; sequence PEKKSNPQKDCNKNTKKRDCKEGDG. The segment covering 444–455 has biased composition (low complexity); it reads SAAGAGDAGASD. The span at 456–474 shows a compositional bias: basic and acidic residues; the sequence is TEAKKCSDKKKEEECKSPN. The GPI-anchor amidated aspartate moiety is linked to residue Asp484. The propeptide at 485-507 is removed in mature form; sequence SSILANKQFALSVASAAFVALLF.

The protein resides in the cell membrane. VSG forms a coat on the surface of the parasite. The trypanosome evades the immune response of the host by expressing a series of antigenically distinct VSGs from an estimated 1000 VSG genes. This chain is Variant surface glycoprotein ILTAT 1.25, found in Trypanosoma brucei brucei.